Consider the following 526-residue polypeptide: Cytochrome P450 monooxygenase 58 (526 aa).

Helical transmembrane passes span 13–33 (IASS…LLLI), 115–135 (FIMA…GYGK), and 306–326 (IGAG…AMTL). Position 451 (C451) interacts with heme.

The protein belongs to the cytochrome P450 family. The cofactor is heme.

It is found in the membrane. The protein operates within secondary metabolite biosynthesis. In terms of biological role, cytochrome P450 monooxygenase that is able to use delta(6)-protoilludene as a substrate to produce delta(6)-protoilludene-8-ol. The protein is Cytochrome P450 monooxygenase 58 of Postia placenta (strain ATCC 44394 / Madison 698-R) (Brown rot fungus).